Reading from the N-terminus, the 667-residue chain is Sorting nexin mvp1 (667 aa).

A disordered region spans residues 221–268 (AGNLHSQQPPKFSVDSSVDDNAITPRKPFSKIPNRLSPSTQPLLSNSR). A compositionally biased stretch (polar residues) spans 224–236 (LHSQQPPKFSVDS). One can recognise a PX domain in the interval 279 to 398 (TSFPASLEMN…RVFFTEPNVF (120 aa)). The a 1,2-diacyl-sn-glycero-3-phospho-(1D-myo-inositol-3-phosphate) site is built by R320, S322, and K346. The tract at residues 574 to 594 (ANSDESGRNRTFLNRSSKKRA) is disordered.

Belongs to the sorting nexin family. As to quaternary structure, homodimer. Forms an autoinhibited tetramer consisting of 2 homodimers that self-interact, wherein the membrane-interacting BAR surfaces are sequestered and the PX lipid-binding sites are occluded. Interacts with Vps1.

The protein resides in the cytoplasm. It is found in the endosome membrane. Functionally, required for vacuolar protein sorting. Component of the retromer-mediated endosome-to-Golgi retrograde pathway. Required for efficient cargo export from the endosome, promoting Vps1-mediated fission of retromer-coated tubules that bud from the endosome. This Schizosaccharomyces pombe (strain 972 / ATCC 24843) (Fission yeast) protein is Sorting nexin mvp1 (mvp1).